A 91-amino-acid chain; its full sequence is Small ribosomal subunit protein uS19 (91 aa).

It belongs to the universal ribosomal protein uS19 family.

Protein S19 forms a complex with S13 that binds strongly to the 16S ribosomal RNA. This Aliarcobacter butzleri (strain RM4018) (Arcobacter butzleri) protein is Small ribosomal subunit protein uS19.